The following is a 239-amino-acid chain: tRNA (guanine-N(7)-)-methyltransferase (239 aa).

The S-adenosyl-L-methionine site is built by glutamate 69, glutamate 94, aspartate 121, and aspartate 144. Aspartate 144 is a catalytic residue. Lysine 148 is a substrate binding site. The interaction with RNA stretch occupies residues 150-155 (RHNKRR). Residues aspartate 180 and 217-220 (TKFE) each bind substrate.

The protein belongs to the class I-like SAM-binding methyltransferase superfamily. TrmB family. As to quaternary structure, monomer.

It carries out the reaction guanosine(46) in tRNA + S-adenosyl-L-methionine = N(7)-methylguanosine(46) in tRNA + S-adenosyl-L-homocysteine. It participates in tRNA modification; N(7)-methylguanine-tRNA biosynthesis. Functionally, catalyzes the formation of N(7)-methylguanine at position 46 (m7G46) in tRNA. The protein is tRNA (guanine-N(7)-)-methyltransferase of Sodalis glossinidius (strain morsitans).